A 475-amino-acid polypeptide reads, in one-letter code: GlcNAc-binding protein A (475 aa).

Residues 1 to 27 (MPKLTQLSLVTLALTAGSTLVSQTASA) form the signal peptide. The Chitin-binding type-4 domain maps to 28–195 (HGYVVSPESR…SFYNAIDVNF (168 aa)). Residues 426–468 (AGTKVLQPKTGKVYQCKPWPYNGYCVQWSPTATGFEPGIGNSW) enclose the Chitin-binding type-3 domain.

The protein belongs to the GbpA family.

It is found in the secreted. Its function is as follows. Probably interacts with GlcNAc residues. May promote attachment to both epithelial cell surfaces and chitin. The polypeptide is GlcNAc-binding protein A (Shewanella oneidensis (strain ATCC 700550 / JCM 31522 / CIP 106686 / LMG 19005 / NCIMB 14063 / MR-1)).